Consider the following 303-residue polypeptide: Pyridoxal 5'-phosphate synthase subunit PdxS (303 aa).

Residue Asp-33 coordinates D-ribose 5-phosphate. Lys-90 acts as the Schiff-base intermediate with D-ribose 5-phosphate in catalysis. Gly-162 lines the D-ribose 5-phosphate pocket. Residue Arg-174 participates in D-glyceraldehyde 3-phosphate binding. Residues Gly-223 and 244-245 (GS) each bind D-ribose 5-phosphate.

It belongs to the PdxS/SNZ family. As to quaternary structure, in the presence of PdxT, forms a dodecamer of heterodimers.

The enzyme catalyses aldehydo-D-ribose 5-phosphate + D-glyceraldehyde 3-phosphate + L-glutamine = pyridoxal 5'-phosphate + L-glutamate + phosphate + 3 H2O + H(+). Its pathway is cofactor biosynthesis; pyridoxal 5'-phosphate biosynthesis. Its function is as follows. Catalyzes the formation of pyridoxal 5'-phosphate from ribose 5-phosphate (RBP), glyceraldehyde 3-phosphate (G3P) and ammonia. The ammonia is provided by the PdxT subunit. Can also use ribulose 5-phosphate and dihydroxyacetone phosphate as substrates, resulting from enzyme-catalyzed isomerization of RBP and G3P, respectively. The polypeptide is Pyridoxal 5'-phosphate synthase subunit PdxS (Mycolicibacterium smegmatis (strain ATCC 700084 / mc(2)155) (Mycobacterium smegmatis)).